Here is a 459-residue protein sequence, read N- to C-terminus: Alcohol acyl transferase 1 allele RGc (459 aa).

Active-site proton acceptor residues include His-164 and Asn-385.

It belongs to the plant acyltransferase family. In terms of tissue distribution, expressed at very low levels in the skin of ripe fruit.

Functionally, involved in the biosynthesis of volatile esters which confer ripe apple fruit flavor. Alcohol acyl transferase that can use a wide range of alcohols as substrate to produce esters. In Malus domestica (Apple), this protein is Alcohol acyl transferase 1 allele RGc.